Reading from the N-terminus, the 221-residue chain is Serine/arginine-rich splicing factor 2 (221 aa).

S2 bears the N-acetylserine mark. S2 carries the phosphoserine modification. The RRM domain maps to 14–92; that stretch reads TSLKVDNLTY…RELRVQMARY (79 aa). T22 and T25 each carry phosphothreonine. Position 26 is a phosphoserine (S26). N6-acetyllysine is present on K52. Positions 92–221 are disordered; sequence YGRPPDSHHS…SPEEEGAVSS (130 aa). Basic residues-rich tracts occupy residues 117–171 and 179–189; these read RRSR…RSKS and SRSRSRSRSRS. Phosphoserine occurs at positions 189, 191, 204, 206, 208, 212, and 220.

It belongs to the splicing factor SR family. As to quaternary structure, interacts with CCNL1 and CCNL2. Interacts with SCAF11. Interacts with ZRSR2/U2AF1-RS2. Interacts with CCDC55 (via C-terminus). In vitro, self-associates and binds SRSF1/SFRS1 (ASF/SF2), SNRNP70 and U2AF1 but not U2AF2. Binds SREK1/SFRS12. Interacts with BRDT. In terms of processing, extensively phosphorylated on serine residues in the RS domain. Phosphorylated by SRPK2 and this causes its redistribution from the nuclear speckle to nucleoplasm and controls cell fate decision in response to cisplatin treatment. KAT5/TIP60 inhibits its phosphorylation by preventing SRPK2 nuclear translocation. Post-translationally, acetylation on Lys-52 by KAT5/TIP60 promotes its proteasomal degradation. This effect is counterbalanced by HDAC6, which positively controls SRSF2 protein level by deacetylating it and preventing its proteasomal degradation. In terms of tissue distribution, expressed in all the tissues examined; liver, kidney, spleen, heart, lung and brain.

The protein localises to the nucleus. It is found in the nucleoplasm. It localises to the nucleus speckle. Necessary for the splicing of pre-mRNA. It is required for formation of the earliest ATP-dependent splicing complex and interacts with spliceosomal components bound to both the 5'- and 3'-splice sites during spliceosome assembly. It also is required for ATP-dependent interactions of both U1 and U2 snRNPs with pre-mRNA. Can bind to the myelin basic protein (MBP) gene MB3 regulatory region and increase transcription of the mbp promoter in cells derived from the CNS. The phosphorylated form (by SRPK2) is required for cellular apoptosis in response to cisplatin treatment. This is Serine/arginine-rich splicing factor 2 (Srsf2) from Mus musculus (Mouse).